A 25-amino-acid polypeptide reads, in one-letter code: Caerin 2.1 (25 aa).

In terms of tissue distribution, expressed by the skin dorsal glands.

It is found in the secreted. Antibacterial peptide with narrow spectrum of activity. Active against the Gram-negative bacterium P.multocida (MIC=25 ug/ml). Inhibits the formation of NO by neuronal nitric oxide synthase with an IC(50) of 9 ug/ml. This Litoria peronii (Emerald spotted tree frog) protein is Caerin 2.1.